The chain runs to 73 residues: uncharacterized protein (73 aa).

The helical transmembrane segment at 54–72 (VSFIVAPTVMQVQCLFFFI) threads the bilayer.

It is found in the membrane. This is an uncharacterized protein from Saccharomyces cerevisiae (strain ATCC 204508 / S288c) (Baker's yeast).